Consider the following 84-residue polypeptide: uncharacterized protein (84 aa).

Residues 7-62 (IDVMLAKRKMSVTELSERVGITMANLSILKNGKAKAIRLSTLEAICKALECQPGDI) form the HTH cro/C1-type domain. Positions 18 to 37 (VTELSERVGITMANLSILKN) form a DNA-binding region, H-T-H motif.

This is an uncharacterized protein from Bacillus subtilis (strain 168).